The following is a 220-amino-acid chain: 26S proteasome non-ATPase regulatory subunit 9 (220 aa).

Coiled coils occupy residues 4 to 32 (GTTT…GQIL) and 61 to 91 (RLAR…YHSE). The PDZ domain maps to 102-200 (RASALDLDSD…QLDLILVPKT (99 aa)).

It belongs to the proteasome subunit p27 family. As to quaternary structure, interacts with PI31; this interaction is increased by PI31 ADP-ribosylation. Interacts with Rpt5.

Functionally, acts as a chaperone during the assembly of the 26S proteasome, specifically of the base subcomplex of the PA700/19S regulatory complex (RC). The sequence is that of 26S proteasome non-ATPase regulatory subunit 9 from Drosophila melanogaster (Fruit fly).